A 313-amino-acid chain; its full sequence is Foldase protein PrsA (313 aa).

The signal sequence occupies residues 1–20 (MKKKLLAGAITLLSVATLAA). Cys-21 carries the N-palmitoyl cysteine lipid modification. Cys-21 carries the S-diacylglycerol cysteine lipid modification. The PpiC domain occupies 143–241 (TPDVTAQIIR…SQYYIVKLTK (99 aa)).

Belongs to the PrsA family.

The protein resides in the cell membrane. It carries out the reaction [protein]-peptidylproline (omega=180) = [protein]-peptidylproline (omega=0). Its function is as follows. Plays a major role in protein secretion by helping the post-translocational extracellular folding of several secreted proteins. The chain is Foldase protein PrsA from Streptococcus pneumoniae serotype 4 (strain ATCC BAA-334 / TIGR4).